Reading from the N-terminus, the 181-residue chain is MTNSSEKQWERIQQLEKEHVEVYRELLITLDRLYLIRKHNHAVILSHTQQRLLEIRHQLQINLEKTALLIRLLEKPDNTNVLFTKLQNLLEESNSLDYELLQSLGAQSSLHKQLIESRAERDELMSKLIELSSKFPKPTIPPDDSDTAGKQVEVEKENETIQELMIALQIHSGYTNISYTI.

The stretch at 112–171 (KQLIESRAERDELMSKLIELSSKFPKPTIPPDDSDTAGKQVEVEKENETIQELMIALQIH) forms a coiled coil.

The protein belongs to the CENP-H/MCM16 family. In terms of assembly, component of the heterotrimeric kinetochore subcomplex CTF3, which consists of CTF3, MCM16 and MCM22. The CTF3 subcomplex is part of a larger constitutive centromere-associated network (CCAN) (also known as central kinetochore CTF19 complex in yeast), which is composed of at least AME1, CHL4, CNN1, CTF3, CTF19, IML3, MCM16, MCM21, MCM22, MHF1, MHF2, MIF2, NKP1, NKP2, OKP1 and WIP1. Interacts with CTF19.

Its subcellular location is the nucleus. The protein resides in the chromosome. The protein localises to the centromere. It is found in the kinetochore. Component of the kinetochore, a multiprotein complex that assembles on centromeric DNA and attaches chromosomes to spindle microtubules, mediating chromosome segregation and sister chromatid segregation during meiosis and mitosis. Component of the inner kinetochore constitutive centromere-associated network (CCAN), which serves as a structural platform for outer kinetochore assembly. The sequence is that of Inner kinetochore subunit MCM16 (MCM16) from Saccharomyces cerevisiae (strain ATCC 204508 / S288c) (Baker's yeast).